The primary structure comprises 335 residues: Beta-hexosaminidase (335 aa).

Residues Asp60, Arg68, Arg133, and 163-164 (KH) each bind substrate. His176 serves as the catalytic Proton donor/acceptor. Catalysis depends on Asp247, which acts as the Nucleophile.

The protein belongs to the glycosyl hydrolase 3 family. NagZ subfamily.

Its subcellular location is the cytoplasm. The catalysed reaction is Hydrolysis of terminal non-reducing N-acetyl-D-hexosamine residues in N-acetyl-beta-D-hexosaminides.. It functions in the pathway cell wall biogenesis; peptidoglycan recycling. Functionally, plays a role in peptidoglycan recycling by cleaving the terminal beta-1,4-linked N-acetylglucosamine (GlcNAc) from peptide-linked peptidoglycan fragments, giving rise to free GlcNAc, anhydro-N-acetylmuramic acid and anhydro-N-acetylmuramic acid-linked peptides. The sequence is that of Beta-hexosaminidase from Xylella fastidiosa (strain M12).